The primary structure comprises 460 residues: GTPase Der (460 aa).

EngA-type G domains are found at residues Phe-3 to Asp-167 and Ile-189 to Asn-364. GTP contacts are provided by residues Gly-9–Ser-16, Asp-56–Leu-60, Asn-119–Glu-122, Gly-195–Ser-202, Asp-242–Leu-246, and Asn-307–Asp-310. A KH-like domain is found at Arg-365–Ala-449.

Belongs to the TRAFAC class TrmE-Era-EngA-EngB-Septin-like GTPase superfamily. EngA (Der) GTPase family. In terms of assembly, associates with the 50S ribosomal subunit.

Its function is as follows. GTPase that plays an essential role in the late steps of ribosome biogenesis. This Rhodopseudomonas palustris (strain BisA53) protein is GTPase Der.